A 159-amino-acid polypeptide reads, in one-letter code: Succinate dehydrogenase assembly factor 2, mitochondrial (159 aa).

A mitochondrion-targeting transit peptide spans 1–14 (MASFCLSRCCALRG).

This sequence belongs to the SDHAF2 family. In terms of assembly, interacts with the flavoprotein subunit within the SDH catalytic dimer.

It is found in the mitochondrion matrix. In terms of biological role, plays an essential role in the assembly of succinate dehydrogenase (SDH), an enzyme complex (also referred to as respiratory complex II) that is a component of both the tricarboxylic acid (TCA) cycle and the mitochondrial electron transport chain, and which couples the oxidation of succinate to fumarate with the reduction of ubiquinone (coenzyme Q) to ubiquinol. Required for flavinylation (covalent attachment of FAD) of the flavoprotein subunit of the SDH catalytic dimer. This is Succinate dehydrogenase assembly factor 2, mitochondrial from Culex quinquefasciatus (Southern house mosquito).